Here is a 69-residue protein sequence, read N- to C-terminus: Disintegrin EMF10A (69 aa).

A Disintegrin domain is found at 1-66 (MNSANPCCDP…DCPRNPWKSE (66 aa)). Disulfide bonds link Cys7/Cys30, Cys21/Cys27, Cys26/Cys51, and Cys39/Cys58. A Cell attachment site motif is present at residues 43 to 45 (RGD).

It belongs to the disintegrin family. Dimeric disintegrin subfamily. Heterodimer with EMF10B; disulfide-linked. Expressed by the venom gland.

It localises to the secreted. Extremely potent and selective inhibitor of integrin alpha-5/beta-1 (ITGA5/ITGB1). Partially inhibits adhesion of cells expressing alpha-IIb/beta-3 (ITGA2B/ITGB3), alpha-V/beta-3 (ITGAV/ITGB3), and alpha-4/beta-1 (ITGA4/ITGB1) to appropriate ligands only at concentration higher than 500 nM. Weakly inhibits ADP-induced platelet aggregation. The chain is Disintegrin EMF10A from Eristicophis macmahoni (Leaf-nosed viper).